Here is a 143-residue protein sequence, read N- to C-terminus: uncharacterized protein (143 aa).

Its subcellular location is the mitochondrion. This is an uncharacterized protein from Arabidopsis thaliana (Mouse-ear cress).